The sequence spans 80 residues: DNA-binding protein HU-like (80 aa).

Belongs to the bacterial histone-like protein family.

In terms of biological role, histone-like DNA-binding protein which is capable of wrapping DNA to stabilize it, and thus to prevent its denaturation under extreme environmental conditions. The polypeptide is DNA-binding protein HU-like (Rickettsia conorii (strain ATCC VR-613 / Malish 7)).